A 463-amino-acid chain; its full sequence is Protein MRG3-like (463 aa).

A helical membrane pass occupies residues 54 to 74; sequence WVLSTGIVSFIAFNIWWVYWP. TPR repeat units lie at residues 84 to 118, 128 to 161, 358 to 389, and 409 to 442; these read KILR…CKAE, TGIE…FYNE, ELIR…ANEN, and SLAH…SEMI.

This sequence belongs to the MGR3 family.

It is found in the membrane. This Saccharomyces cerevisiae (strain ATCC 204508 / S288c) (Baker's yeast) protein is Protein MRG3-like.